The sequence spans 967 residues: uncharacterized protein (967 aa).

The signal sequence occupies residues 1 to 29; sequence MKKKLKSVLIWFLIFTFNLSLGSFREVFA. 2 consecutive BIG2 domains span residues 38–107 and 133–190; these read TAIT…QDGS and LPVG…VNDG.

This is an uncharacterized protein from Clostridium acetobutylicum (strain ATCC 824 / DSM 792 / JCM 1419 / IAM 19013 / LMG 5710 / NBRC 13948 / NRRL B-527 / VKM B-1787 / 2291 / W).